Here is an 811-residue protein sequence, read N- to C-terminus: G-type lectin S-receptor-like serine/threonine-protein kinase LECRK3 (811 aa).

Residues 1–23 (MAHLLFLPILQLLLLYCTKSAQA) form the signal peptide. The Bulb-type lectin domain maps to 24 to 153 (QLNISIGSSL…DGATKWESFG (130 aa)). Topologically, residues 24–464 (QLNISIGSSL…DKKYWILGSS (441 aa)) are extracellular. Asn-26, Asn-39, Asn-59, Asn-219, Asn-226, Asn-237, and Asn-242 each carry an N-linked (GlcNAc...) asparagine glycan. One can recognise an EGF-like; atypical domain in the interval 292-344 (PENICQSIQTMVGSGACGFNSYCTIDGTKNTTSCLCPQNYKFIDDKRKYKGCR). Intrachain disulfides connect Cys-296/Cys-314, Cys-308/Cys-325, Cys-327/Cys-343, Cys-389/Cys-411, and Cys-393/Cys-399. N-linked (GlcNAc...) asparagine glycosylation is present at Asn-321. A PAN domain is found at 352 to 430 (CDLDETTAML…GKMDVNVPRT (79 aa)). The helical transmembrane segment at 465–485 (LLFGSSVLVNFLLISVMLFGT) threads the bilayer. Over 486-811 (YCSITSRKKI…DPSSYISSLA (326 aa)) the chain is Cytoplasmic. The region spanning 521 to 795 (GGFQEVLGTG…KVTQMLDGAV (275 aa)) is the Protein kinase domain. ATP is bound by residues 527–535 (LGTGASGVV) and Lys-551. Asp-645 serves as the catalytic Proton acceptor.

This sequence belongs to the protein kinase superfamily. Ser/Thr protein kinase family.

It is found in the membrane. The catalysed reaction is L-seryl-[protein] + ATP = O-phospho-L-seryl-[protein] + ADP + H(+). The enzyme catalyses L-threonyl-[protein] + ATP = O-phospho-L-threonyl-[protein] + ADP + H(+). In terms of biological role, involved in resistance against the herbivorous insect brown planthopper (N.lugens, BPH). Member of the BPH3 (BPH resistance locus 3) cluster which contains LECRK1, LECRK2 and LECRK3. This Oryza sativa subsp. indica (Rice) protein is G-type lectin S-receptor-like serine/threonine-protein kinase LECRK3.